Consider the following 363-residue polypeptide: NADH-quinone oxidoreductase subunit H (363 aa).

10 helical membrane passes run 29–49 (VLKI…YVVW), 62–82 (GPMY…KLLF), 96–116 (FIIA…VVPF), 127–147 (VGLL…ILAG), 163–183 (AAQV…VMIA), 202–222 (FFDW…VSGV), 238–257 (EIVA…LFFL), 264–286 (ILVS…QGWV), 299–319 (KGGW…YIWF), and 339–359 (FIPL…YGVI).

Belongs to the complex I subunit 1 family. In terms of assembly, NDH-1 is composed of 14 different subunits. Subunits NuoA, H, J, K, L, M, N constitute the membrane sector of the complex.

The protein localises to the cell inner membrane. The enzyme catalyses a quinone + NADH + 5 H(+)(in) = a quinol + NAD(+) + 4 H(+)(out). Its function is as follows. NDH-1 shuttles electrons from NADH, via FMN and iron-sulfur (Fe-S) centers, to quinones in the respiratory chain. The immediate electron acceptor for the enzyme in this species is believed to be ubiquinone. Couples the redox reaction to proton translocation (for every two electrons transferred, four hydrogen ions are translocated across the cytoplasmic membrane), and thus conserves the redox energy in a proton gradient. This subunit may bind ubiquinone. The protein is NADH-quinone oxidoreductase subunit H of Xanthomonas oryzae pv. oryzae (strain PXO99A).